The following is a 215-amino-acid chain: Cytochrome b6 (215 aa).

A helical membrane pass occupies residues 32–52 (IFYCLGGITFTCFLLQVASGF). C35 lines the heme c pocket. H86 and H100 together coordinate heme b. 3 helical membrane passes run 90-110 (ASMMVLTMILHVFRVYLTGGF), 116-136 (LTWVTGVILAVLTVSFGVTGY), and 186-206 (LHTFILPLLTAVFMLMHFLMI). H187 and H202 together coordinate heme b.

This sequence belongs to the cytochrome b family. PetB subfamily. The 4 large subunits of the cytochrome b6-f complex are cytochrome b6, subunit IV (17 kDa polypeptide, PetD), cytochrome f and the Rieske protein, while the 4 small subunits are PetG, PetL, PetM and PetN. The complex functions as a dimer. Heme b is required as a cofactor. It depends on heme c as a cofactor.

Its subcellular location is the plastid. It localises to the chloroplast thylakoid membrane. Functionally, component of the cytochrome b6-f complex, which mediates electron transfer between photosystem II (PSII) and photosystem I (PSI), cyclic electron flow around PSI, and state transitions. This Coleochaete orbicularis (Charophycean green alga) protein is Cytochrome b6.